The sequence spans 402 residues: Protein indeterminate-domain 12 (402 aa).

Positions 47 to 66 are disordered; the sequence is TETHKPKKKRGLPGNPDPDA. Phosphoserine is present on S72. C2H2-type zinc fingers lie at residues 82–104 and 124–154; these read FVCE…RRGH and YVCP…CRKH. A Nuclear localization signal motif is present at residues 146 to 153; sequence IKKHFCRK. The segment at 159-183 adopts a C2H2-type 2; degenerate zinc-finger fold; that stretch reads WKCEKCSKFYAVQSDWKAHTKICGT. C161, C164, H177, C181, C188, C190, H203, and C207 together coordinate Zn(2+). The CCHC-type 2; atypical zinc-finger motif lies at 186–209; that stretch reads YRCDCGTLFSRKDTFITHRAFCDA. The interval 196 to 208 is SHR-binding; the sequence is RKDTFITHRAFCD.

The protein localises to the nucleus. Functionally, probable transcription factor. This chain is Protein indeterminate-domain 12, found in Arabidopsis thaliana (Mouse-ear cress).